The chain runs to 229 residues: 2,3-bisphosphoglycerate-dependent phosphoglycerate mutase (229 aa).

Substrate-binding positions include 7–14 (RHGQSEWN), 20–21 (TG), Arg-59, 86–89 (ERHY), Lys-97, 113–114 (RR), and 182–183 (GN). His-8 acts as the Tele-phosphohistidine intermediate in catalysis. Glu-86 acts as the Proton donor/acceptor in catalysis.

It belongs to the phosphoglycerate mutase family. BPG-dependent PGAM subfamily.

It carries out the reaction (2R)-2-phosphoglycerate = (2R)-3-phosphoglycerate. It participates in carbohydrate degradation; glycolysis; pyruvate from D-glyceraldehyde 3-phosphate: step 3/5. In terms of biological role, catalyzes the interconversion of 2-phosphoglycerate and 3-phosphoglycerate. This is 2,3-bisphosphoglycerate-dependent phosphoglycerate mutase from Listeria monocytogenes serovar 1/2a (strain ATCC BAA-679 / EGD-e).